The sequence spans 104 residues: UPF0213 protein PA3854 (104 aa).

The region spanning 13 to 88 is the GIY-YIG domain; the sequence is KCWSVYLVRA…KALSKRAKER (76 aa).

The protein belongs to the UPF0213 family.

This chain is UPF0213 protein PA3854, found in Pseudomonas aeruginosa (strain ATCC 15692 / DSM 22644 / CIP 104116 / JCM 14847 / LMG 12228 / 1C / PRS 101 / PAO1).